The primary structure comprises 120 residues: uncharacterized protein (120 aa).

This is an uncharacterized protein from Mycoplasma pneumoniae (strain ATCC 29342 / M129 / Subtype 1) (Mycoplasmoides pneumoniae).